The sequence spans 122 residues: Seripauperin-5 (122 aa).

A helical membrane pass occupies residues 7–24; the sequence is IAAGVAAIAAGASAAATT.

Belongs to the SRP1/TIP1 family. Seripauperin subfamily.

The protein localises to the membrane. The sequence is that of Seripauperin-5 (PAU5) from Saccharomyces cerevisiae (strain ATCC 204508 / S288c) (Baker's yeast).